The following is a 626-amino-acid chain: Two-component response regulator ORR24 (626 aa).

The tract at residues 1 to 22 (MTVEERQGRVGGHGVSGGGGGR) is disordered. Residues 9–22 (RVGGHGVSGGGGGR) show a composition bias toward gly residues. Residues 30–145 (RVLAVDDDPT…QLRTIWQHVI (116 aa)) enclose the Response regulatory domain. At D81 the chain carries 4-aspartylphosphate. The segment covering 151 to 162 (DAKNRGNDDDAG) has biased composition (basic and acidic residues). Disordered regions lie at residues 151-215 (DAKN…KKPR) and 400-440 (LQPL…RTTN). Residues 191–202 (NGDDGDDSDENS) show a composition bias toward acidic residues. Residues 210-269 (TQKKPRVVWSVELHRKFVAAVNQLGIEKAVPKKILDLMNVENITRENVASHLQKYRLYLK) constitute a DNA-binding region (myb-like GARP). Over residues 400 to 421 (LQPLESSSQQHLSRVHSSSADP) the composition is skewed to polar residues.

The protein belongs to the ARR family. Type-B subfamily. In terms of processing, two-component system major event consists of a His-to-Asp phosphorelay between a sensor histidine kinase (HK) and a response regulator (RR). In plants, the His-to-Asp phosphorelay involves an additional intermediate named Histidine-containing phosphotransfer protein (HPt). This multistep phosphorelay consists of a His-Asp-His-Asp sequential transfer of a phosphate group between first a His and an Asp of the HK protein, followed by the transfer to a conserved His of the HPt protein and finally the transfer to an Asp in the receiver domain of the RR protein.

It is found in the nucleus. Transcriptional activator that binds specific DNA sequence. Functions as a response regulator involved in His-to-Asp phosphorelay signal transduction system. Phosphorylation of the Asp residue in the receiver domain activates the ability of the protein to promote the transcription of target genes. May directly activate some type-A response regulators in response to cytokinins. The polypeptide is Two-component response regulator ORR24 (Oryza sativa subsp. indica (Rice)).